Reading from the N-terminus, the 122-residue chain is Large ribosomal subunit protein uL14c (122 aa).

It belongs to the universal ribosomal protein uL14 family. As to quaternary structure, part of the 50S ribosomal subunit.

It is found in the plastid. The protein localises to the chloroplast. Its function is as follows. Binds to 23S rRNA. This chain is Large ribosomal subunit protein uL14c, found in Phaseolus vulgaris (Kidney bean).